A 256-amino-acid chain; its full sequence is Pimeloyl-[acyl-carrier protein] methyl ester esterase (256 aa).

An AB hydrolase-1 domain is found at 15-242; the sequence is HLVLLHGWGL…AAHAPFISHP (228 aa). Residues Trp-22, 82–83, and 143–147 each bind substrate; these read SL and FLALQ. The Nucleophile role is filled by Ser-82. Active-site residues include Asp-207 and His-235. His-235 contacts substrate.

This sequence belongs to the AB hydrolase superfamily. Carboxylesterase BioH family. In terms of assembly, monomer.

Its subcellular location is the cytoplasm. It carries out the reaction 6-carboxyhexanoyl-[ACP] methyl ester + H2O = 6-carboxyhexanoyl-[ACP] + methanol + H(+). It functions in the pathway cofactor biosynthesis; biotin biosynthesis. Functionally, the physiological role of BioH is to remove the methyl group introduced by BioC when the pimeloyl moiety is complete. It allows to synthesize pimeloyl-ACP via the fatty acid synthetic pathway through the hydrolysis of the ester bonds of pimeloyl-ACP esters. The sequence is that of Pimeloyl-[acyl-carrier protein] methyl ester esterase from Escherichia coli O6:K15:H31 (strain 536 / UPEC).